A 457-amino-acid polypeptide reads, in one-letter code: Bifunctional protein GlmU (457 aa).

Positions 1–236 (MDQDACTHSA…DWHFLGVNTP (236 aa)) are pyrophosphorylase. Residues 14 to 17 (LAAG), lysine 28, glutamine 79, and 84 to 85 (GT) contribute to the UDP-N-acetyl-alpha-D-glucosamine site. Aspartate 110 provides a ligand contact to Mg(2+). UDP-N-acetyl-alpha-D-glucosamine is bound by residues glycine 145, glutamate 159, asparagine 176, and asparagine 234. A Mg(2+)-binding site is contributed by asparagine 234. Residues 237 to 257 (KDLSYVESIQQAFIIEKLLQS) form a linker region. The segment at 258–457 (GVIIHSPESV…GKQKNFSKRK (200 aa)) is N-acetyltransferase. The UDP-N-acetyl-alpha-D-glucosamine site is built by arginine 340 and lysine 358. Histidine 370 functions as the Proton acceptor in the catalytic mechanism. Positions 373 and 384 each coordinate UDP-N-acetyl-alpha-D-glucosamine. Acetyl-CoA contacts are provided by residues alanine 387, 393–394 (NY), serine 412, alanine 430, and arginine 447.

This sequence in the N-terminal section; belongs to the N-acetylglucosamine-1-phosphate uridyltransferase family. It in the C-terminal section; belongs to the transferase hexapeptide repeat family. Homotrimer. Requires Mg(2+) as cofactor.

Its subcellular location is the cytoplasm. The enzyme catalyses alpha-D-glucosamine 1-phosphate + acetyl-CoA = N-acetyl-alpha-D-glucosamine 1-phosphate + CoA + H(+). The catalysed reaction is N-acetyl-alpha-D-glucosamine 1-phosphate + UTP + H(+) = UDP-N-acetyl-alpha-D-glucosamine + diphosphate. It participates in nucleotide-sugar biosynthesis; UDP-N-acetyl-alpha-D-glucosamine biosynthesis; N-acetyl-alpha-D-glucosamine 1-phosphate from alpha-D-glucosamine 6-phosphate (route II): step 2/2. Its pathway is nucleotide-sugar biosynthesis; UDP-N-acetyl-alpha-D-glucosamine biosynthesis; UDP-N-acetyl-alpha-D-glucosamine from N-acetyl-alpha-D-glucosamine 1-phosphate: step 1/1. It functions in the pathway bacterial outer membrane biogenesis; LPS lipid A biosynthesis. In terms of biological role, catalyzes the last two sequential reactions in the de novo biosynthetic pathway for UDP-N-acetylglucosamine (UDP-GlcNAc). The C-terminal domain catalyzes the transfer of acetyl group from acetyl coenzyme A to glucosamine-1-phosphate (GlcN-1-P) to produce N-acetylglucosamine-1-phosphate (GlcNAc-1-P), which is converted into UDP-GlcNAc by the transfer of uridine 5-monophosphate (from uridine 5-triphosphate), a reaction catalyzed by the N-terminal domain. In Lawsonia intracellularis (strain PHE/MN1-00), this protein is Bifunctional protein GlmU.